The chain runs to 434 residues: Salicylate hydroxylase (434 aa).

9–38 is an FAD binding site; sequence RIGIVGGGISGVALALELCRYSHIQVQLFE.

In terms of assembly, monomer. Requires FAD as cofactor.

It catalyses the reaction salicylate + NADH + O2 + 2 H(+) = catechol + CO2 + NAD(+) + H2O. Its pathway is aromatic compound metabolism; naphthalene degradation. The sequence is that of Salicylate hydroxylase (nahG) from Pseudomonas putida (Arthrobacter siderocapsulatus).